A 228-amino-acid chain; its full sequence is Glycerol-3-phosphate acyltransferase (228 aa).

6 helical membrane passes run 1–21 (MINWLVLNAVILIVAYLLGAT), 56–76 (VPALVVLVIDIFKGALAIALV), 104–124 (MVIIAGLIAIVGHTKSIWIGF), 136–156 (ILLAISWVVGLGTLSVFIVVL), 161–181 (IVSLSSIIAAISVSGLMFFTG), and 183–203 (PLPYQIFAITGGIYVIWRHIS).

This sequence belongs to the PlsY family. As to quaternary structure, probably interacts with PlsX.

Its subcellular location is the cell inner membrane. The enzyme catalyses an acyl phosphate + sn-glycerol 3-phosphate = a 1-acyl-sn-glycero-3-phosphate + phosphate. It participates in lipid metabolism; phospholipid metabolism. Catalyzes the transfer of an acyl group from acyl-phosphate (acyl-PO(4)) to glycerol-3-phosphate (G3P) to form lysophosphatidic acid (LPA). This enzyme utilizes acyl-phosphate as fatty acyl donor, but not acyl-CoA or acyl-ACP. The protein is Glycerol-3-phosphate acyltransferase of Trichodesmium erythraeum (strain IMS101).